We begin with the raw amino-acid sequence, 230 residues long: Flagellar L-ring protein (230 aa).

Residues 1–26 (MKQVRLLPSATVRAACAVAVAAFAAG) form the signal peptide. Cysteine 27 is lipidated: N-palmitoyl cysteine. Residue cysteine 27 is the site of S-diacylglycerol cysteine attachment.

This sequence belongs to the FlgH family. In terms of assembly, the basal body constitutes a major portion of the flagellar organelle and consists of four rings (L,P,S, and M) mounted on a central rod.

It is found in the cell outer membrane. The protein localises to the bacterial flagellum basal body. In terms of biological role, assembles around the rod to form the L-ring and probably protects the motor/basal body from shearing forces during rotation. The chain is Flagellar L-ring protein from Burkholderia lata (strain ATCC 17760 / DSM 23089 / LMG 22485 / NCIMB 9086 / R18194 / 383).